A 282-amino-acid chain; its full sequence is Small ribosomal subunit protein uS3 (282 aa).

A KH type-2 domain is found at 43–111 (IRQLMSTGME…QVQLNILEVK (69 aa)). Residues 218 to 282 (QQAASAPSRG…AAVATEGSDA (65 aa)) form a disordered region. Positions 230–262 (PRRDGDDRGPRRENSGPRRDGGNLRSQRNDRNE) are enriched in basic and acidic residues. A compositionally biased stretch (low complexity) spans 263–276 (NAAVEAAPAAAAVA).

This sequence belongs to the universal ribosomal protein uS3 family. In terms of assembly, part of the 30S ribosomal subunit. Forms a tight complex with proteins S10 and S14.

Binds the lower part of the 30S subunit head. Binds mRNA in the 70S ribosome, positioning it for translation. In Renibacterium salmoninarum (strain ATCC 33209 / DSM 20767 / JCM 11484 / NBRC 15589 / NCIMB 2235), this protein is Small ribosomal subunit protein uS3.